Consider the following 413-residue polypeptide: Peptidase T (413 aa).

Position 81 (His-81) interacts with Zn(2+). Asp-83 is an active-site residue. Asp-143 serves as a coordination point for Zn(2+). Glu-178 serves as the catalytic Proton acceptor. Zn(2+)-binding residues include Glu-179, Asp-201, and His-383.

The protein belongs to the peptidase M20B family. Requires Zn(2+) as cofactor.

The protein localises to the cytoplasm. The catalysed reaction is Release of the N-terminal residue from a tripeptide.. Functionally, cleaves the N-terminal amino acid of tripeptides. This Lactococcus lactis subsp. cremoris (Streptococcus cremoris) protein is Peptidase T.